The primary structure comprises 534 residues: Cytokinin dehydrogenase 1 (534 aa).

Residues 1-18 (MAVVYYLLLAGLIACSHA) form the signal peptide. N-linked (GlcNAc...) asparagine glycosylation is found at N52, N63, and N89. Residues 65–245 (TSALPAAVLY…TRARIAVEPA (181 aa)) enclose the FAD-binding PCMH-type domain. FAD is bound by residues F100, G102, R103, and G104. H105 is modified (pros-8alpha-FAD histidine). Residues S106 and Q110 each contribute to the FAD site. An N-linked (GlcNAc...) asparagine glycan is attached at N134. 5 residues coordinate FAD: D169, T174, S180, I184, and I235. D169 lines the N(6)-dimethylallyladenine pocket. Residue D169 coordinates trans-zeatin. Residues N294, N323, and N338 are each glycosylated (N-linked (GlcNAc...) asparagine). Residue E381 coordinates N(6)-dimethylallyladenine. Trans-zeatin is bound at residue E381. N-linked (GlcNAc...) asparagine glycosylation is present at N434. S456 is a binding site for trans-zeatin. 3 residues coordinate FAD: Y491, S527, and Q530.

This sequence belongs to the oxygen-dependent FAD-linked oxidoreductase family. In terms of assembly, monomer. FAD serves as cofactor. Post-translationally, glycosylated; with approximately 10 hexose residues per site. In terms of tissue distribution, expressed in immature kernels and unpollinated cobs. Weakly expressed in kernels harvested two weeks after anthesis.

The protein localises to the secreted. The protein resides in the extracellular space. It carries out the reaction N(6)-dimethylallyladenine + A + H2O = 3-methyl-2-butenal + adenine + AH2. With respect to regulation, competitive inhibition by phenylureas. In terms of biological role, catalyzes the oxidation of cytokinins, a family of N(6)-substituted adenine derivatives that are plant hormones, where the substituent is an isopentenyl group. Cleaves trans-zeatin, N(6)-dimethylallyladenine (isopentenyladenine), isopentenyladenosine, zeatin riboside and cis-zeatin, but not dihydrozeatin, kinetin and benzylaminopurine. In Zea mays (Maize), this protein is Cytokinin dehydrogenase 1 (CKX1).